Consider the following 182-residue polypeptide: Testis-expressed protein 29 (182 aa).

Residues 1–56 (MRYTTDIKKSPPQLLKTFAVCDISLYDICDYNVTRDQCKELGCCFYKGVCYKKVVP) are Extracellular-facing. A helical transmembrane segment spans residues 57-77 (IYVQMFSTLIVLVTGIIIITI). Over 78-182 (IYRIVQEIKR…PPTDPSENPP (105 aa)) the chain is Cytoplasmic. A disordered region spans residues 91–182 (LSMNSTPKAS…PPTDPSENPP (92 aa)). Residues 115 to 170 (RAPSRSPSRTSSTLSSRSPTTAPTTAPTTDPATDPATDPATDPATDPATDPATDPA) are compositionally biased toward low complexity. Residues 171-182 (TAPPTDPSENPP) are compositionally biased toward pro residues.

It localises to the membrane. This is Testis-expressed protein 29 (Tex29) from Rattus norvegicus (Rat).